A 229-amino-acid polypeptide reads, in one-letter code: Zinc finger matrin-type protein 4 (229 aa).

Matrin-type zinc fingers lie at residues 14 to 44 (SYCKVCSAQLISESQRVAHYESRKHASKVRL), 72 to 106 (DKNKCCTLCNMSFTSAVVADSHYQGKIHAKRLKLL), 145 to 175 (RYCGLCAAWFNNPLMAQQHYEGKKHKKNAAR), and 198 to 228 (YRCTTCSVSLNSIEQYHAHLQGSKHQTNLKN).

It is found in the nucleus. This Mus musculus (Mouse) protein is Zinc finger matrin-type protein 4 (Zmat4).